We begin with the raw amino-acid sequence, 185 residues long: Putative sulfur carrier protein YrkF (185 aa).

Cys15 (cysteine persulfide intermediate) is an active-site residue. The region spanning 101 to 185 is the Rhodanese domain; it reads SDESLNILDV…GMRDWTGKTE (85 aa).

Belongs to the sulfur carrier protein TusA family.

The polypeptide is Putative sulfur carrier protein YrkF (yrkF) (Bacillus subtilis (strain 168)).